We begin with the raw amino-acid sequence, 37 residues long: Cytochrome b6-f complex subunit 5 (37 aa).

Residues 5–25 form a helical membrane-spanning segment; it reads ILLGIVLGMVVVTLAGLFVAA.

It belongs to the PetG family. In terms of assembly, the 4 large subunits of the cytochrome b6-f complex are cytochrome b6, subunit IV (17 kDa polypeptide, PetD), cytochrome f and the Rieske protein, while the 4 small subunits are PetG, PetL, PetM and PetN. The complex functions as a dimer.

It localises to the cellular thylakoid membrane. Functionally, component of the cytochrome b6-f complex, which mediates electron transfer between photosystem II (PSII) and photosystem I (PSI), cyclic electron flow around PSI, and state transitions. PetG is required for either the stability or assembly of the cytochrome b6-f complex. The chain is Cytochrome b6-f complex subunit 5 from Synechococcus sp. (strain JA-2-3B'a(2-13)) (Cyanobacteria bacterium Yellowstone B-Prime).